The chain runs to 275 residues: uncharacterized protein (275 aa).

This sequence belongs to the MtfA family.

This is an uncharacterized protein from Synechocystis sp. (strain ATCC 27184 / PCC 6803 / Kazusa).